Here is a 504-residue protein sequence, read N- to C-terminus: Maturase K (504 aa).

This sequence belongs to the intron maturase 2 family. MatK subfamily.

It is found in the plastid. The protein localises to the chloroplast. In terms of biological role, usually encoded in the trnK tRNA gene intron. Probably assists in splicing its own and other chloroplast group II introns. The sequence is that of Maturase K from Betula papyrifera (Paper birch).